We begin with the raw amino-acid sequence, 288 residues long: Oxaloacetate decarboxylase (288 aa).

Ser-47 provides a ligand contact to substrate. Asp-85 provides a ligand contact to Mg(2+). The substrate site is built by Arg-156 and His-232.

This sequence belongs to the isocitrate lyase/PEP mutase superfamily. Oxaloacetate decarboxylase family. Homotetramer; dimer of dimers. The cofactor is Mg(2+).

The enzyme catalyses oxaloacetate + H(+) = pyruvate + CO2. In terms of biological role, catalyzes the decarboxylation of oxaloacetate into pyruvate. Seems to play a role in maintaining cellular concentrations of bicarbonate and pyruvate. The sequence is that of Oxaloacetate decarboxylase from Bradyrhizobium diazoefficiens (strain JCM 10833 / BCRC 13528 / IAM 13628 / NBRC 14792 / USDA 110).